Reading from the N-terminus, the 228-residue chain is NADH-quinone oxidoreductase subunit C (228 aa).

It belongs to the complex I 30 kDa subunit family. NDH-1 is composed of 14 different subunits. Subunits NuoB, C, D, E, F, and G constitute the peripheral sector of the complex.

It is found in the cell membrane. The enzyme catalyses a quinone + NADH + 5 H(+)(in) = a quinol + NAD(+) + 4 H(+)(out). Its function is as follows. NDH-1 shuttles electrons from NADH, via FMN and iron-sulfur (Fe-S) centers, to quinones in the respiratory chain. The immediate electron acceptor for the enzyme in this species is believed to be a menaquinone. Couples the redox reaction to proton translocation (for every two electrons transferred, four hydrogen ions are translocated across the cytoplasmic membrane), and thus conserves the redox energy in a proton gradient. The sequence is that of NADH-quinone oxidoreductase subunit C from Mycobacteroides abscessus (strain ATCC 19977 / DSM 44196 / CCUG 20993 / CIP 104536 / JCM 13569 / NCTC 13031 / TMC 1543 / L948) (Mycobacterium abscessus).